The sequence spans 203 residues: Putative phosphoserine phosphatase 2 (203 aa).

The Tele-phosphohistidine intermediate role is filled by histidine 9. The active site involves histidine 149.

Belongs to the histidine phosphatase superfamily. Metal-independent phosphoserine phosphatase family. In terms of assembly, heterodimer with PspA. The PspB subunit appears to have no or considerably lower PSP activity compared with that of PspA.

It catalyses the reaction O-phospho-L-serine + H2O = L-serine + phosphate. It carries out the reaction O-phospho-D-serine + H2O = D-serine + phosphate. It functions in the pathway amino-acid biosynthesis; L-serine biosynthesis; L-serine from 3-phospho-D-glycerate: step 3/3. Its activity is regulated as follows. Activity is not inhibited by EDTA in vitro, nor enhanced by the addition of Mg(2+). Its function is as follows. Part of a complex that catalyzes the dephosphorylation of L-phosphoserine to serine and inorganic phosphate. Is poorly or not active toward D-phosphoserine, DL-phosphothreonine, 3-phosphoglycerate, para-nitrophenylphosphate, and fructose-6-phosphate. Does not display phosphoglycerate mutase activity. The sequence is that of Putative phosphoserine phosphatase 2 (pspB) from Hydrogenobacter thermophilus (strain DSM 6534 / IAM 12695 / TK-6).